The primary structure comprises 446 residues: Alpha-galacturonidase (446 aa).

Ile10 to Thr72 is a binding site for NAD(+). Asn151 lines the substrate pocket. Residue Cys173 coordinates Mn(2+). The Proton donor role is filled by His174. His210 is a Mn(2+) binding site.

The protein belongs to the glycosyl hydrolase 4 family. In terms of assembly, homotetramer. NAD(+) is required as a cofactor. The cofactor is Mn(2+).

It carries out the reaction [(1-&gt;4)-alpha-D-galacturonosyl](n) + H2O = alpha-D-galacturonate + [(1-&gt;4)-alpha-D-galacturonosyl](n-1). Alpha-galacturonidase able to catalyze the hydrolysis of the chromogenic substrate p-nitrophenyl-alpha-D-galacturonic acid (pNPalphaGalUA), and of the probable natural substrate alpha-1,4-di-galacturonate (GalUA(2)). Can neither hydrolyze pNPbetaGalUA, nor the stereoisomeric pNPalphaGlcUA. Does not display alpha- or beta-glucosidase activity as it fails to hydrolyze melibiose, raffinose, lactose and the chromogenic analogs, pNPalphaGal and pNPbetaGal. Cannot use the following compounds as substrates: pNP-N-acetyl-alpha- and beta-D-galactosaminide, pNP-N-acetyl-alpha- and beta-D-glucosaminide, pNP-alpha-L- and beta-L-arabinopyranoside, pNP-alpha- and beta-D-glucuronide, pNP-alpha- and beta-D-glucopyranoside, pNP-alpha- and beta-D-glucopyranoside 6-phosphate, pNP-alpha-D-galactopyranoside 6-phosphate and oNP-beta-D-galactopyranoside 6-phosphate. This is Alpha-galacturonidase (lplD) from Bacillus subtilis (strain 168).